The chain runs to 425 residues: Serine hydroxymethyltransferase (425 aa).

(6S)-5,6,7,8-tetrahydrofolate contacts are provided by residues Leu-123 and 127-129 (GHL). Lys-232 bears the N6-(pyridoxal phosphate)lysine mark. Glu-248 provides a ligand contact to (6S)-5,6,7,8-tetrahydrofolate.

This sequence belongs to the SHMT family. In terms of assembly, homodimer. It depends on pyridoxal 5'-phosphate as a cofactor.

Its subcellular location is the cytoplasm. The enzyme catalyses (6R)-5,10-methylene-5,6,7,8-tetrahydrofolate + glycine + H2O = (6S)-5,6,7,8-tetrahydrofolate + L-serine. It functions in the pathway one-carbon metabolism; tetrahydrofolate interconversion. Its pathway is amino-acid biosynthesis; glycine biosynthesis; glycine from L-serine: step 1/1. Functionally, catalyzes the reversible interconversion of serine and glycine with tetrahydrofolate (THF) serving as the one-carbon carrier. This reaction serves as the major source of one-carbon groups required for the biosynthesis of purines, thymidylate, methionine, and other important biomolecules. Also exhibits THF-independent aldolase activity toward beta-hydroxyamino acids, producing glycine and aldehydes, via a retro-aldol mechanism. The polypeptide is Serine hydroxymethyltransferase (Anaplasma phagocytophilum (strain HZ)).